A 490-amino-acid polypeptide reads, in one-letter code: Probable cytosol aminopeptidase (490 aa).

Lysine 257 and aspartate 262 together coordinate Mn(2+). Residue lysine 269 is part of the active site. Positions 281, 341, and 343 each coordinate Mn(2+). Arginine 345 is an active-site residue.

It belongs to the peptidase M17 family. Mn(2+) serves as cofactor.

It is found in the cytoplasm. The catalysed reaction is Release of an N-terminal amino acid, Xaa-|-Yaa-, in which Xaa is preferably Leu, but may be other amino acids including Pro although not Arg or Lys, and Yaa may be Pro. Amino acid amides and methyl esters are also readily hydrolyzed, but rates on arylamides are exceedingly low.. It carries out the reaction Release of an N-terminal amino acid, preferentially leucine, but not glutamic or aspartic acids.. Presumably involved in the processing and regular turnover of intracellular proteins. Catalyzes the removal of unsubstituted N-terminal amino acids from various peptides. In Prochlorococcus marinus (strain MIT 9312), this protein is Probable cytosol aminopeptidase.